Reading from the N-terminus, the 272-residue chain is Alcohol dehydrogenase-related 31 kDa protein (272 aa).

An NAD(+)-binding site is contributed by 11-34 (YVADCGGIALETSKVLMTKNIAKL). Ser139 contributes to the substrate binding site. Tyr152 acts as the Proton acceptor in catalysis.

This sequence belongs to the short-chain dehydrogenases/reductases (SDR) family.

The chain is Alcohol dehydrogenase-related 31 kDa protein (Adhr) from Drosophila teissieri (Fruit fly).